The chain runs to 505 residues: MEEFQGHIELDRSWQHNFFYPLIFQEYIYAFAYDHGLNKSILLENSGDKKYSLLIVKRLITRMSQQNHLILSANDSNQNEIFGHKNKKKLYSEMITEGFAVIVEIPFSLLLISSLEGKEIVKSHNLRSIHSIFPFLEDKFLHLNYVLDILIPYPAHLEILVQTLRYWLKDASSLHFLRFFLYEYRNWNSLITQKEFISFLKKRNQRLFLFLYNFHVCEYESLFVFLRNQSSYLRSTSFGALLERIHFYGKIKYLVKVFTNDLGVIQWFFKEPFPHYVRYQGKSILASKGTFFLMHKWKYYIIYFWQCNFSVWSQPRKIYINRLSNHSLDFMGFFSSVRLNSSVIRSQLLENSFLIENIIKKFDTIVPIIPLVGSLAKAKFCNVLGHPVSKSVWADLSDSDIIDRFGRICRNLSHYYSGSSRKKSLYRIKYILRLSCARTLSRKHKSTVRSFLKRLGSEFLEEFFTEEEKVLSLILPRDSSTSWGLYKRRIWYLDIICIHKLVNDE.

It belongs to the intron maturase 2 family. MatK subfamily.

The protein resides in the plastid. It is found in the chloroplast. Usually encoded in the trnK tRNA gene intron. Probably assists in splicing its own and other chloroplast group II introns. The protein is Maturase K of Beta vulgaris (Sugar beet).